Consider the following 247-residue polypeptide: Osmotin-like protein OSML81 (247 aa).

An N-terminal signal peptide occupies residues 1-21; that stretch reads MGYLRSSFIFSLLAFVTYTYA. Cystine bridges form between Cys-30-Cys-225, Cys-72-Cys-82, Cys-87-Cys-93, Cys-141-Cys-213, Cys-146-Cys-196, Cys-154-Cys-164, Cys-168-Cys-177, and Cys-178-Cys-183.

The protein belongs to the thaumatin family.

This Solanum commersonii (Commerson's wild potato) protein is Osmotin-like protein OSML81.